A 497-amino-acid polypeptide reads, in one-letter code: Putative endothelial lipase (497 aa).

A signal peptide spans 1-23 (MRACPFLLLLLLPLLLSLGRIAA). Cys73 and Cys86 are disulfide-bonded. 2 N-linked (GlcNAc...) asparagine glycosylation sites follow: Asn89 and Asn145. Residue Ser178 is the Nucleophile of the active site. Residue Asp202 is the Charge relay system of the active site. A disulfide bond links Cys262 and Cys282. The Charge relay system role is filled by His284. Disulfide bonds link Cys307–Cys326 and Cys318–Cys321. Residue 335 to 347 (KMRNKRNSKMYLK) coordinates heparin. A PLAT domain is found at 357–492 (FHYQLKIHVF…CLKMVKVEKH (136 aa)). A glycan (N-linked (GlcNAc...) asparagine) is linked at Asn403.

Belongs to the AB hydrolase superfamily. Lipase family. In terms of assembly, head to tail homodimer. In terms of tissue distribution, expressed by the venom gland.

The protein resides in the secreted. It catalyses the reaction a triacylglycerol + H2O = a diacylglycerol + a fatty acid + H(+). With respect to regulation, inhibited by serum. Functionally, has phospholipase and triglyceride lipase activities. This chain is Putative endothelial lipase, found in Crotalus adamanteus (Eastern diamondback rattlesnake).